A 309-amino-acid polypeptide reads, in one-letter code: ATP synthase gamma chain (309 aa).

The protein belongs to the ATPase gamma chain family. F-type ATPases have 2 components, CF(1) - the catalytic core - and CF(0) - the membrane proton channel. CF(1) has five subunits: alpha(3), beta(3), gamma(1), delta(1), epsilon(1). CF(0) has three main subunits: a, b and c.

Its subcellular location is the cell membrane. Functionally, produces ATP from ADP in the presence of a proton gradient across the membrane. The gamma chain is believed to be important in regulating ATPase activity and the flow of protons through the CF(0) complex. In Salinispora arenicola (strain CNS-205), this protein is ATP synthase gamma chain.